Reading from the N-terminus, the 335-residue chain is Fructose-1,6-bisphosphatase class 1 (335 aa).

The Mg(2+) site is built by Glu-92, Asp-115, Leu-117, and Asp-118. Substrate is bound by residues 118–121 (DGSS), Asn-211, Tyr-244, 262–264 (YLY), and Lys-274. Mg(2+) is bound at residue Glu-280.

The protein belongs to the FBPase class 1 family. In terms of assembly, homotetramer. Mg(2+) serves as cofactor.

It is found in the cytoplasm. The enzyme catalyses beta-D-fructose 1,6-bisphosphate + H2O = beta-D-fructose 6-phosphate + phosphate. It participates in carbohydrate biosynthesis; gluconeogenesis. The polypeptide is Fructose-1,6-bisphosphatase class 1 (Teredinibacter turnerae (strain ATCC 39867 / T7901)).